A 459-amino-acid polypeptide reads, in one-letter code: ATP synthase subunit beta (459 aa).

148–155 (GGAGVGKT) serves as a coordination point for ATP.

The protein belongs to the ATPase alpha/beta chains family. In terms of assembly, F-type ATPases have 2 components, CF(1) - the catalytic core - and CF(0) - the membrane proton channel. CF(1) has five subunits: alpha(3), beta(3), gamma(1), delta(1), epsilon(1). CF(0) has three main subunits: a(1), b(2) and c(9-12). The alpha and beta chains form an alternating ring which encloses part of the gamma chain. CF(1) is attached to CF(0) by a central stalk formed by the gamma and epsilon chains, while a peripheral stalk is formed by the delta and b chains.

It localises to the cell inner membrane. The enzyme catalyses ATP + H2O + 4 H(+)(in) = ADP + phosphate + 5 H(+)(out). Its function is as follows. Produces ATP from ADP in the presence of a proton gradient across the membrane. The catalytic sites are hosted primarily by the beta subunits. In Vesicomyosocius okutanii subsp. Calyptogena okutanii (strain HA), this protein is ATP synthase subunit beta.